A 618-amino-acid chain; its full sequence is Arginine--tRNA ligase (618 aa).

The 'HIGH' region motif lies at 113–123 (ANPIHPLHIGH).

It belongs to the class-I aminoacyl-tRNA synthetase family.

Its subcellular location is the cytoplasm. It catalyses the reaction tRNA(Arg) + L-arginine + ATP = L-arginyl-tRNA(Arg) + AMP + diphosphate. In Sulfolobus acidocaldarius (strain ATCC 33909 / DSM 639 / JCM 8929 / NBRC 15157 / NCIMB 11770), this protein is Arginine--tRNA ligase.